The sequence spans 518 residues: Alpha-ionylideneethane synthase abl3 (518 aa).

2 disordered regions span residues 294–355 and 440–466; these read AAPG…SVFE and KAPP…QRSK. The span at 299 to 339 shows a compositional bias: low complexity; sequence TSSDNSSDNRSSSISSTSSTGTDGSGAGDASSVHSSGVHSD.

Belongs to the alpha-ionylideneethane synthase family.

The protein operates within hormone biosynthesis. Alpha-ionylideneethane synthase involved in the biosynthesis of abscisic acid (ABA), a phytohormone that acts antagonistically toward salicylic acid (SA), jasmonic acid (JA) and ethylene (ETH) signaling, to impede plant defense responses. During pathogen-host interaction, ABA plays a dual role in disease severity by increasing plant susceptibility and accelerating pathogenesis in the fungus itself. The first step of the pathway catalyzes the reaction from farnesyl diphosphate to alpha-ionylideneethane performed by the alpha-ionylideneethane synthase ABA3 via a three-step reaction mechanism involving 2 neutral intermediates, beta-farnesene and allofarnesene. The cytochrome P450 monooxygenase ABA1 might then be involved in the conversion of alpha-ionylideneethane to alpha-ionylideneacetic acid. Alpha-ionylideneacetic acid is further converted to abscisic acid in 2 steps involving the cytochrome P450 monooxygenase ABA2 and the short-chain dehydrogenase/reductase ABA4, via the intermediates 1'-deoxy-ABA or 1',4'-trans-diol-ABA, depending on the order of action of these 2 enzymes. ABA2 is responsible for the hydroxylation of carbon atom C-1' and ABA4 might be involved in the oxidation of the C-4' carbon atom. The chain is Alpha-ionylideneethane synthase abl3 from Pyricularia oryzae (strain Y34) (Rice blast fungus).